We begin with the raw amino-acid sequence, 278 residues long: Probable ribosomal RNA small subunit methyltransferase A (278 aa).

Residues asparagine 23, leucine 25, glycine 50, glutamate 71, aspartate 95, and asparagine 110 each contribute to the S-adenosyl-L-methionine site.

This sequence belongs to the class I-like SAM-binding methyltransferase superfamily. rRNA adenine N(6)-methyltransferase family. RsmA subfamily.

Its subcellular location is the cytoplasm. Specifically dimethylates two adjacent adenosines in the loop of a conserved hairpin near the 3'-end of 16S rRNA in the 30S particle. May play a critical role in biogenesis of 30S subunits. The polypeptide is Probable ribosomal RNA small subunit methyltransferase A (Thermococcus gammatolerans (strain DSM 15229 / JCM 11827 / EJ3)).